The primary structure comprises 311 residues: Solute carrier family 25 member 48 (311 aa).

Solcar repeat units lie at residues 3–86, 101–205, and 214–301; these read SFQL…TQRF, RTLS…LSEW, and PSPC…SLQA. Transmembrane regions (helical) follow at residues 9 to 29, 61 to 81, 107 to 127, 189 to 209, 217 to 237, and 277 to 295; these read FAAGWIGGAASVIVGHPLDTV, GMSFPLASIAVYNSVVFGVFS, LLASMVAGVVSVGLGGPVDLI, VPGYCLYFIPYVFLSEWITPE, CAVWLAGGMAGAISWGTATPM, and ITVNAVRGFPMSAAMFLGY.

This sequence belongs to the mitochondrial carrier (TC 2.A.29) family.

The protein localises to the mitochondrion inner membrane. The protein is Solute carrier family 25 member 48 (SLC25A48) of Homo sapiens (Human).